The primary structure comprises 122 residues: Large ribosomal subunit protein uL14 (122 aa).

Belongs to the universal ribosomal protein uL14 family. Part of the 50S ribosomal subunit. Forms a cluster with proteins L3 and L19. In the 70S ribosome, L14 and L19 interact and together make contacts with the 16S rRNA in bridges B5 and B8.

Its function is as follows. Binds to 23S rRNA. Forms part of two intersubunit bridges in the 70S ribosome. The polypeptide is Large ribosomal subunit protein uL14 (Borreliella afzelii (strain PKo) (Borrelia afzelii)).